The primary structure comprises 165 residues: Nuclear cap-binding protein subunit 2 (165 aa).

Residues Tyr-19, Tyr-42, 111 to 115 (RADWD), 122 to 126 (RQYGR), and 132 to 133 (QV) contribute to the mRNA site. The 79-residue stretch at 39-117 (HTLYVGNLSF…RIIRADWDAG (79 aa)) folds into the RRM domain. The disordered stretch occupies residues 144-165 (ARGGYGKLAQQHRPTEAIRNTF).

Belongs to the RRM NCBP2 family. As to quaternary structure, component of the nuclear cap-binding complex (CBC), a heterodimer composed of ncbp1/cbp80 and ncbp2/cbp20 that interacts with m7GpppG-capped RNA.

It localises to the nucleus. The protein localises to the cytoplasm. Its function is as follows. Component of the cap-binding complex (CBC), which binds co-transcriptionally to the 5' cap of pre-mRNAs and is involved in various processes such as pre-mRNA splicing, translation regulation, nonsense-mediated mRNA decay, RNA-mediated gene silencing (RNAi) by microRNAs (miRNAs) and mRNA export. The CBC complex is involved in mRNA export from the nucleus, leading to the recruitment of the mRNA export machinery to the 5' end of mRNA and to mRNA export in a 5' to 3' direction through the nuclear pore. The CBC complex is also involved in mediating U snRNA and intronless mRNAs export from the nucleus. The CBC complex is essential for a pioneer round of mRNA translation, before steady state translation when the CBC complex is replaced by cytoplasmic cap-binding protein eIF4E. The pioneer round of mRNA translation mediated by the CBC complex plays a central role in nonsense-mediated mRNA decay (NMD), NMD only taking place in mRNAs bound to the CBC complex, but not on eIF4E-bound mRNAs. The CBC complex enhances NMD in mRNAs containing at least one exon-junction complex (EJC), promoting the interaction between upf1 and upf2. The CBC complex is also involved in 'failsafe' NMD, which is independent of the EJC complex, while it does not participate in Staufen-mediated mRNA decay (SMD). During cell proliferation, the CBC complex is also involved in microRNAs (miRNAs) biogenesis via its interaction with srrt/ars2, thereby being required for miRNA-mediated RNA interference. The CBC complex also acts as a negative regulator of parn, thereby acting as an inhibitor of mRNA deadenylation. In the CBC complex, ncbp2/cbp20 recognizes and binds capped RNAs (m7GpppG-capped RNA) but requires ncbp1/cbp80 to stabilize the movement of its N-terminal loop and lock the CBC into a high affinity cap-binding state with the cap structure. The conventional cap-binding complex with NCBP2 binds both small nuclear RNA (snRNA) and messenger (mRNA) and is involved in their export from the nucleus. The chain is Nuclear cap-binding protein subunit 2 (ncbp2) from Siniperca chuatsi (Mandarin fish).